The sequence spans 503 residues: Glycerol kinase (503 aa).

T14 serves as a coordination point for ADP. Residues T14, T15, and S16 each coordinate ATP. A sn-glycerol 3-phosphate-binding site is contributed by T14. Position 18 (R18) interacts with ADP. Sn-glycerol 3-phosphate-binding residues include R84, E85, Y136, and D246. Residues R84, E85, Y136, D246, and Q247 each coordinate glycerol. ADP is bound by residues T268 and G311. Positions 268, 311, 315, and 412 each coordinate ATP. ADP contacts are provided by G412 and N416.

The protein belongs to the FGGY kinase family.

The catalysed reaction is glycerol + ATP = sn-glycerol 3-phosphate + ADP + H(+). The protein operates within polyol metabolism; glycerol degradation via glycerol kinase pathway; sn-glycerol 3-phosphate from glycerol: step 1/1. Its activity is regulated as follows. Inhibited by fructose 1,6-bisphosphate (FBP). Key enzyme in the regulation of glycerol uptake and metabolism. Catalyzes the phosphorylation of glycerol to yield sn-glycerol 3-phosphate. In Haemophilus influenzae (strain 86-028NP), this protein is Glycerol kinase.